A 132-amino-acid polypeptide reads, in one-letter code: ATP synthase epsilon chain (132 aa).

Belongs to the ATPase epsilon chain family. In terms of assembly, F-type ATPases have 2 components, CF(1) - the catalytic core - and CF(0) - the membrane proton channel. CF(1) has five subunits: alpha(3), beta(3), gamma(1), delta(1), epsilon(1). CF(0) has three main subunits: a, b and c.

It localises to the cell inner membrane. In terms of biological role, produces ATP from ADP in the presence of a proton gradient across the membrane. In Aquifex aeolicus (strain VF5), this protein is ATP synthase epsilon chain (atpC).